The following is a 147-amino-acid chain: ATP synthase subunit 9, mitochondrial (147 aa).

A mitochondrion-targeting transit peptide spans 1–66; the sequence is MASTRVLASR…TTRQAFQKRA (66 aa). A run of 2 helical transmembrane segments spans residues 86–106 and 123–143; these read SAAI…AALL and AILG…VALM.

Belongs to the ATPase C chain family. In terms of assembly, F-type ATPases have 2 components, CF(1) - the catalytic core - and CF(0) - the membrane proton channel. CF(1) has five subunits: alpha(3), beta(3), gamma(1), delta(1), epsilon(1). CF(0) has three main subunits: a, b and c.

It is found in the mitochondrion membrane. Mitochondrial membrane ATP synthase (F(1)F(0) ATP synthase or Complex V) produces ATP from ADP in the presence of a proton gradient across the membrane which is generated by electron transport complexes of the respiratory chain. F-type ATPases consist of two structural domains, F(1) - containing the extramembraneous catalytic core and F(0) - containing the membrane proton channel, linked together by a central stalk and a peripheral stalk. During catalysis, ATP synthesis in the catalytic domain of F(1) is coupled via a rotary mechanism of the central stalk subunits to proton translocation. Part of the complex F(0) domain. A homomeric c-ring of probably 10 subunits is part of the complex rotary element. The protein is ATP synthase subunit 9, mitochondrial (oli) of Neurospora crassa (strain ATCC 24698 / 74-OR23-1A / CBS 708.71 / DSM 1257 / FGSC 987).